The chain runs to 367 residues: Peptide chain release factor 2 (367 aa).

Glutamine 250 bears the N5-methylglutamine mark.

The protein belongs to the prokaryotic/mitochondrial release factor family. In terms of processing, methylated by PrmC. Methylation increases the termination efficiency of RF2.

The protein resides in the cytoplasm. Peptide chain release factor 2 directs the termination of translation in response to the peptide chain termination codons UGA and UAA. The sequence is that of Peptide chain release factor 2 from Kineococcus radiotolerans (strain ATCC BAA-149 / DSM 14245 / SRS30216).